Consider the following 162-residue polypeptide: Larval cuticle protein F1 (162 aa).

4 repeat units span residues 27-30, 43-46, 59-62, and 75-78.

Functionally, component of the larval cuticle. In Tenebrio molitor (Yellow mealworm beetle), this protein is Larval cuticle protein F1.